A 1159-amino-acid polypeptide reads, in one-letter code: WASH complex subunit 5 (1159 aa).

Belongs to the strumpellin family. In terms of assembly, component of the WASH complex.

It is found in the early endosome. Acts at least in part as component of the WASH complex which seems to regulate washc1 nucleation-promoting factor (NPF) activity and is required for its membrane targeting during endosomal sorting. This chain is WASH complex subunit 5, found in Danio rerio (Zebrafish).